The chain runs to 880 residues: EP-cadherin (880 aa).

The signal sequence occupies residues 1–28; it reads MGSTRLRNASVWLCGLLCLLQVVPSINA. Residues 29–155 constitute a propeptide that is removed on maturation; it reads DVSGCKPGFS…THTGLKRKKR (127 aa). An N-linked (GlcNAc...) asparagine glycan is attached at Asn-61. 5 Cadherin domains span residues 156-263, 264-376, 377-487, 488-593, and 594-704; these read DWVI…RPKF, TQDV…APIF, DPKT…APFF, VPAV…DNGP, and VPSP…GFDL. Residues 156–703 lie on the Extracellular side of the membrane; sequence DWVIPPIKVS…CQEKLVGGFD (548 aa). 3 O-linked (GalNAc...) threonine glycosylation sites follow: Thr-343, Thr-382, and Thr-400. The N-linked (GlcNAc...) asparagine glycan is linked to Asn-425. Residues Thr-428, Thr-469, Thr-471, Thr-473, and Thr-475 are each glycosylated (O-linked (GalNAc...) threonine). Asn-558 carries N-linked (GlcNAc...) asparagine glycosylation. 4 O-linked (GalNAc...) threonine glycosylation sites follow: Thr-562, Thr-576, Thr-578, and Thr-580. 2 disulfides stabilise this stretch: Cys-603-Cys-687 and Cys-685-Cys-694. N-linked (GlcNAc...) asparagine glycosylation occurs at Asn-681. The chain crosses the membrane as a helical span at residues 704–728; sequence LPIILVILGSVLALLILFLLLLLFL. Residues 729-880 are Cytoplasmic-facing; the sequence is KRKKVVKEPL…DMYGGDDDEE (152 aa). The segment at 790–826 is disordered; it reads PAPHYRPRPSNPDEIGNFIDENLDAADNDPTAPPYDS.

In terms of assembly, interacts with CTNNB1.

It is found in the cell membrane. In terms of biological role, cadherins are calcium-dependent cell adhesion proteins. They preferentially interact with themselves in a homophilic manner in connecting cells; cadherins may thus contribute to the sorting of heterogeneous cell types. This chain is EP-cadherin, found in Xenopus laevis (African clawed frog).